A 396-amino-acid chain; its full sequence is MPQEFEDARAVLQKIEDAGFDAFFVGGSVRDTLLNKPIHDVDIASSAYPAEIKHIFKKTVDTGIEHGTVMVIHDGEGYEVTTFRTESGYQDFRRPDQVTFVRSLKEDLMRRDFTINAFALKEDRTVIDIFDGLSDLEHKIIRAVGDPHERFHEDALRMMRAVRFASQLDFKIEAKTLKAIEENNMLLGKISVERILVEFEKMMLGSKPNRGLEDMLTTKLNEYCPGFKDRSKELDQLTKYPLKLLENPEQVWTMIAWSLKLTPQEVMPFLKQWKTSNDLIKNVSATLQVLSMDKNDQNERLALFNAGEANVVNAIRVAQILGMNREAWLDTYQNLQIKDTHEMAITGKELIQKGIIKPGPQMGQVLNRLKLMVINDELKNESLALLNAVNKLQKDD.

Positions 27 and 30 each coordinate ATP. CTP is bound by residues glycine 27 and arginine 30. Positions 40 and 42 each coordinate Mg(2+). Residues arginine 111, aspartate 154, arginine 157, arginine 160, and arginine 163 each coordinate ATP. Residues arginine 111, aspartate 154, arginine 157, arginine 160, and arginine 163 each contribute to the CTP site.

This sequence belongs to the tRNA nucleotidyltransferase/poly(A) polymerase family. Bacterial CCA-adding enzyme type 3 subfamily. As to quaternary structure, homodimer. It depends on Mg(2+) as a cofactor.

It carries out the reaction a tRNA precursor + 2 CTP + ATP = a tRNA with a 3' CCA end + 3 diphosphate. The catalysed reaction is a tRNA with a 3' CCA end + 2 CTP + ATP = a tRNA with a 3' CCACCA end + 3 diphosphate. Catalyzes the addition and repair of the essential 3'-terminal CCA sequence in tRNAs without using a nucleic acid template. Adds these three nucleotides in the order of C, C, and A to the tRNA nucleotide-73, using CTP and ATP as substrates and producing inorganic pyrophosphate. tRNA 3'-terminal CCA addition is required both for tRNA processing and repair. Also involved in tRNA surveillance by mediating tandem CCA addition to generate a CCACCA at the 3' terminus of unstable tRNAs. While stable tRNAs receive only 3'-terminal CCA, unstable tRNAs are marked with CCACCA and rapidly degraded. In Pediococcus pentosaceus (strain ATCC 25745 / CCUG 21536 / LMG 10740 / 183-1w), this protein is CCA-adding enzyme.